A 512-amino-acid chain; its full sequence is Lysine--tRNA ligase (512 aa).

Residues E408 and E415 each contribute to the Mg(2+) site.

The protein belongs to the class-II aminoacyl-tRNA synthetase family. As to quaternary structure, homodimer. The cofactor is Mg(2+).

The protein resides in the cytoplasm. The catalysed reaction is tRNA(Lys) + L-lysine + ATP = L-lysyl-tRNA(Lys) + AMP + diphosphate. The sequence is that of Lysine--tRNA ligase from Prochlorococcus marinus subsp. pastoris (strain CCMP1986 / NIES-2087 / MED4).